Consider the following 192-residue polypeptide: MEMIVIAVVALTLLALLFGMLLGYASRRFAAEEDPVVDQVDELLPQSQCGQCGYPGCRPYAEAVANNGEQINRCVPGGEPVMQKIATLLNVEPQPLDGDAAMAEPVRMLAVIDEPNCIGCTKCIQACPVDAIVGATRAMHTVMSDLCTGCNLCVDPCPTQCIELRPAATTTDNWKWDLNTIPVRNIPVEQHA.

The hydrophobic stretch occupies residues 1 to 26 (MEMIVIAVVALTLLALLFGMLLGYAS). In terms of domain architecture, 4Fe-4S spans 32 to 91 (EEDPVVDQVDELLPQSQCGQCGYPGCRPYAEAVANNGEQINRCVPGGEPVMQKIATLLNV). [4Fe-4S] cluster-binding residues include Cys49, Cys52, Cys57, Cys74, Cys117, Cys120, Cys123, Cys127, Cys147, Cys150, Cys153, and Cys157. 4Fe-4S ferredoxin-type domains follow at residues 108-137 (MLAV…GATR) and 138-167 (AMHT…LRPA).

The protein belongs to the 4Fe4S bacterial-type ferredoxin family. RnfB subfamily. In terms of assembly, the complex is composed of six subunits: RnfA, RnfB, RnfC, RnfD, RnfE and RnfG. [4Fe-4S] cluster is required as a cofactor.

It localises to the cell inner membrane. Functionally, part of a membrane-bound complex that couples electron transfer with translocation of ions across the membrane. This Cronobacter sakazakii (strain ATCC BAA-894) (Enterobacter sakazakii) protein is Ion-translocating oxidoreductase complex subunit B.